The primary structure comprises 162 residues: Putative pre-16S rRNA nuclease (162 aa).

This sequence belongs to the YqgF nuclease family.

It localises to the cytoplasm. Could be a nuclease involved in processing of the 5'-end of pre-16S rRNA. The protein is Putative pre-16S rRNA nuclease of Brucella melitensis biotype 1 (strain ATCC 23456 / CCUG 17765 / NCTC 10094 / 16M).